A 262-amino-acid polypeptide reads, in one-letter code: Indole-3-glycerol phosphate synthase (262 aa).

Belongs to the TrpC family.

The enzyme catalyses 1-(2-carboxyphenylamino)-1-deoxy-D-ribulose 5-phosphate + H(+) = (1S,2R)-1-C-(indol-3-yl)glycerol 3-phosphate + CO2 + H2O. It functions in the pathway amino-acid biosynthesis; L-tryptophan biosynthesis; L-tryptophan from chorismate: step 4/5. The sequence is that of Indole-3-glycerol phosphate synthase from Bordetella bronchiseptica (strain ATCC BAA-588 / NCTC 13252 / RB50) (Alcaligenes bronchisepticus).